Here is an 852-residue protein sequence, read N- to C-terminus: Nucleolar protein 14 homolog (852 aa).

Residues 1-40 (MVAKGKKASADAVYAKKTTRSANPFDNSTAQSSKRGNPFD) form a disordered region. Over residues 20–35 (RSANPFDNSTAQSSKR) the composition is skewed to polar residues. Residues 190-221 (IDEMIVEQKRRKNEIAKEKDEVYDLTEKLDAN) adopt a coiled-coil conformation. 2 disordered regions span residues 288 to 324 (RRMRADGEEDEEASVAKPKHRSADDLDDGYFLAGEDD) and 338 to 410 (LGTH…KSAD). Residues 344 to 353 (GKKEAVLKGD) show a composition bias toward basic and acidic residues. Residues 354 to 381 (ENEDDDDKEGEEEEEEDSDEESDSEVDN) show a composition bias toward acidic residues. Residues 774 to 851 (KMSKAKEERA…ELSRAKKKKK (78 aa)) adopt a coiled-coil conformation.

The protein belongs to the NOP14 family. In terms of assembly, component of the ribosomal small subunit (SSU) processome.

The protein resides in the nucleus. It is found in the nucleolus. Involved in nucleolar processing of pre-18S ribosomal RNA. Has a role in the nuclear export of 40S pre-ribosomal subunit to the cytoplasm. The protein is Nucleolar protein 14 homolog (l(3)07882) of Drosophila melanogaster (Fruit fly).